Here is a 445-residue protein sequence, read N- to C-terminus: Phosphoglucosamine mutase (445 aa).

The Phosphoserine intermediate role is filled by Ser99. Mg(2+)-binding residues include Ser99, Asp242, Asp244, and Asp246. A Phosphoserine modification is found at Ser99.

It belongs to the phosphohexose mutase family. The cofactor is Mg(2+). Post-translationally, activated by phosphorylation.

The catalysed reaction is alpha-D-glucosamine 1-phosphate = D-glucosamine 6-phosphate. Functionally, catalyzes the conversion of glucosamine-6-phosphate to glucosamine-1-phosphate. The sequence is that of Phosphoglucosamine mutase from Campylobacter jejuni subsp. jejuni serotype O:2 (strain ATCC 700819 / NCTC 11168).